We begin with the raw amino-acid sequence, 862 residues long: Aldehyde-alcohol dehydrogenase (862 aa).

The active site involves Cys-244. 420–425 (GFWGGN) contacts NAD(+).

The protein in the N-terminal section; belongs to the aldehyde dehydrogenase family. It in the C-terminal section; belongs to the iron-containing alcohol dehydrogenase family.

The enzyme catalyses a primary alcohol + NAD(+) = an aldehyde + NADH + H(+). It catalyses the reaction a secondary alcohol + NAD(+) = a ketone + NADH + H(+). The catalysed reaction is an aldehyde + NAD(+) + H2O = a carboxylate + NADH + 2 H(+). Functionally, has both aldehyde and alcohol dehydrogenase activities. Can use acetaldehyde, butyraldehyde, butanol and ethanol. In Clostridium acetobutylicum (strain ATCC 824 / DSM 792 / JCM 1419 / IAM 19013 / LMG 5710 / NBRC 13948 / NRRL B-527 / VKM B-1787 / 2291 / W), this protein is Aldehyde-alcohol dehydrogenase.